A 710-amino-acid polypeptide reads, in one-letter code: Lactotransferrin (710 aa).

The N-terminal stretch at 1–19 (MKLVFLVLLFLGALGLCLA) is a signal peptide. A Phosphoserine; alternate modification is found at phenylalanine 10. A glycan (O-linked (GlcNAc) serine; alternate) is linked at phenylalanine 10. Positions 20–24 (GRRRS) are critical for glycosaminoglycan, lipid A, lysozyme and DNA binding. Bactericidal and antifungal activity regions lie at residues 20-29 (GRRRSVQWCA) and 39-49 (FQWQRNMRKVR). The interval 21–22 (RR) is important for full bactericidal and antifungal activities. Transferrin-like domains lie at 25–352 (VQWC…NLRK) and 364–695 (VVWC…NLKK). 2 disulfides stabilise this stretch: cysteine 28-cysteine 64 and cysteine 38-cysteine 55. Interaction with PspA regions lie at residues 39–46 (FQWQRNMR) and 57–58 (KR). The interaction with lipopolysaccharide stretch occupies residues 39 to 49 (FQWQRNMRKVR). An involved in glycosaminoglycan binding region spans residues 46-51 (RKVRGP). Aspartate 79 lines the Fe(3+) pocket. The active site involves lysine 92. A Fe(3+)-binding site is contributed by tyrosine 111. Disulfide bonds link cysteine 134/cysteine 217, cysteine 176/cysteine 192, cysteine 189/cysteine 200, and cysteine 250/cysteine 264. Hydrogencarbonate contacts are provided by threonine 136, arginine 140, alanine 142, and glycine 143. N-linked (GlcNAc...) asparagine glycosylation is present at asparagine 156. Tyrosine 211 contacts Fe(3+). Histidine 272 is a Fe(3+) binding site. Residue serine 278 is the Nucleophile of the active site. Cystine bridges form between cysteine 367-cysteine 399 and cysteine 377-cysteine 390. Residues glutamine 379 and serine 391 each participate in a glycyl lysine isopeptide (Lys-Gly) (interchain with G-Cter in ubiquitin) cross-link. 2 residues coordinate Fe(3+): aspartate 414 and tyrosine 454. Cystine bridges form between cysteine 424–cysteine 705, cysteine 446–cysteine 668, cysteine 478–cysteine 553, cysteine 502–cysteine 696, cysteine 512–cysteine 526, cysteine 523–cysteine 536, cysteine 594–cysteine 608, and cysteine 646–cysteine 651. Residues threonine 480, arginine 484, alanine 486, and glycine 487 each contribute to the hydrogencarbonate site. The N-linked (GlcNAc...) asparagine glycan is linked to asparagine 497. Tyrosine 547 lines the Fe(3+) pocket. Histidine 616 contributes to the Fe(3+) binding site. The N-linked (GlcNAc...) asparagine glycan is linked to asparagine 642.

The protein belongs to the transferrin family. Monomer. Found in a complex with LTF, CLU, EPPIN and SEMG1. Found in a complex with MPO and LTF; interacts directly with CP, allows Fe(3+) incorporation into LTF and activation of CP ferroxidase activity. Phosphorylation at Ser-10 activates the transcriptional activity. Phosphorylation at Ser-10 also promotes proteasomal degradation. Alternatively can undergo O-GlcNAcylation at Ser-10. Post-translationally, O-GlcNAcylation at Ser-10 inhibits DNA binding and negatively regulates the transcriptional activity. Alternatively can undergo phosphorylation at Ser-10. In terms of processing, poly-N-acetyllactosaminic carbohydrate moiety seems to be needed for TLR4 activation. High levels are found in saliva and tears, intermediate levels in serum and plasma, and low levels in urine. In kidney, detected in the distal collecting tubules in the medulla but not in the cortical region or in blood vessels. Detected in peripheral blood neutrophils (at protein level). Isoform 1 and isoform DeltaLf are expressed in breast, prostate, spleen, pancreas, kidney, small intestine, lung, skeletal muscle, uterus, thymus and fetal liver. Isoform 1 is expressed in brain, testis and peripheral blood leukocytes; isoform DeltaLf is barely detectable in these tissues. Isoform DeltaLf is expressed in placenta, liver and ovary; isoform 1 is barely detectable in these tissues. In kidney, isoform 1 is expressed at high levels in the collecting tubules of the medulla but at very low levels in the cortex.

The protein resides in the secreted. It localises to the cytoplasmic granule. It is found in the cytoplasm. Its subcellular location is the nucleus. Its function is as follows. Transferrins are iron binding transport proteins which can bind two Fe(3+) ions in association with the binding of an anion, usually bicarbonate. Major iron-binding and multifunctional protein found in exocrine fluids such as breast milk and mucosal secretions. Has antimicrobial activity, which depends on the extracellular cation concentration. Antimicrobial properties include bacteriostasis, which is related to its ability to sequester free iron and thus inhibit microbial growth, as well as direct bactericidal properties leading to the release of lipopolysaccharides from the bacterial outer membrane. Can also prevent bacterial biofilm development in P.aeruginosa infection. Has weak antifungal activity against C.albicans. Has anabolic, differentiating and anti-apoptotic effects on osteoblasts and can also inhibit osteoclastogenesis, possibly playing a role in the regulation of bone growth. Promotes binding of species C adenoviruses to epithelial cells, promoting adenovirus infection. Can inhibit papillomavirus infections. Stimulates the TLR4 signaling pathway leading to NF-kappa-B activation and subsequent pro-inflammatory cytokine production while also interfering with the lipopolysaccharide (LPS)-stimulated TLR4 signaling. Inhibits neutrophil granulocyte migration to sites of apoptosis, when secreted by apoptotic cells. Stimulates VEGFA-mediated endothelial cell migration and proliferation. Binds heparin, chondroitin sulfate and possibly other glycosaminoglycans (GAGs). Also binds specifically to pneumococcal surface protein A (PspA), the lipid A portion of bacterial lipopolysaccharide (LPS), lysozyme and DNA. In terms of biological role, lactoferricin binds to the bacterial surface and is crucial for the bactericidal functions. Has some antiviral activity against papillomavirus infection. N-terminal region shows strong antifungal activity against C.albicans. Contains two BBXB heparin-binding consensus sequences that appear to form the predominate functional GAG-binding site. Functionally, has antimicrobial activity and is able to permeabilize different ions through liposomal membranes. Its function is as follows. Has opioid antagonist activity. Shows preference for mu-receptor. Has opioid antagonist activity. Shows higher degrees of preference for kappa-receptors than for mu-receptors. In terms of biological role, the lactotransferrin transferrin-like domain 1 functions as a serine protease of the peptidase S60 family that cuts arginine rich regions. This function contributes to the antimicrobial activity. Shows a preferential cleavage at -Arg-Ser-Arg-Arg-|- and -Arg-Arg-Ser-Arg-|-, and of Z-Phe-Arg-|-aminomethylcoumarin sites. Functionally, transcription factor with antiproliferative properties and ability to induce cell cycle arrest. Binds to the DeltaLf response element found in the SKP1, BAX, DCPS, and SELENOH promoters. The chain is Lactotransferrin from Homo sapiens (Human).